We begin with the raw amino-acid sequence, 336 residues long: Cytochrome P450 monooxygenase lcsN (336 aa).

C271 contacts heme.

It belongs to the cytochrome P450 family. It depends on heme as a cofactor.

It functions in the pathway secondary metabolite biosynthesis. Cytochrome P450 monooxygenase; part of the gene cluster that mediates the biosynthesis of the lipopeptide antibiotics leucinostatins that show extensive biological activities, including antimalarial, antiviral, antibacterial, antifungal, and antitumor activities, as well as phytotoxic. Leucinostatin A contains nine amino acid residues, including the unusual amino acid 4-methyl-L-proline (MePro), 2-amino-6-hydroxy-4-methyl-8-oxodecanoic acid (AHyMeOA), 3-hydroxyleucine (HyLeu), alpha-aminoisobutyric acid (AIB), beta-Ala, a 4-methylhex-2-enoic acid at the N-terminus as well as a N1,N1-dimethylpropane-1,2-diamine (DPD) at the C-terminus. The biosynthesis of leucinostatins is probably initiated with the assembly of 4-methylhex-2-enoic acid by a reducing PKS. Two reducing polyketide synthases, lcsB and lcsC, have been identified in the cluster and it is not clear which is the one that assembles 4-methylhex-2-enoic acid since both contain KS, AT, DH, cMT, ER, KR and ACP domains. The polyketide residue might be transferred to the NRPS lcsA, mediated by two additional enzymes, the acyl-CoA ligase lcsD and the thioesterase lcsE. The linear polyketide carboxylic acid, which is released from PKS, is converted to a CoA thioester by lcsD, and then lcsE hydrolyzes the thiol bond and shuttles the polyketide intermediate to lcsA. The C domain of the first module catalyzed the condensation of 4-methylhex-2-enoic acid and MePro carried by domain A1, followed by successive condensations of nine amino acids to trigger the elongation of the linear peptide. A5 and A6 domains of lcsA are proposed to incorporate leucine, A2 AHyMeOA, and A3 incorporates HyLeu. A4, A7 and A8 incorporate AIB. The AHyMeOA in leucinostatin A activated by the A2 might be produced by the second PKS (lcsB or lcsC) present within the cluster. The MePro is probably produced via leucine cyclization and may originate from a separate pathway, independent of the cluster. Another nonproteinogenic amino acid, beta-Ala, could be produced by an aspartic acid decarboxylase also localized outside of the cluster. Two candidates are VFPBJ_01400 and VFPBJ_10476. The final peptide scaffold may be released by the NAD(P)H-dependent thioester reductase (TE) at the C-terminal region of lcsA. Transamination of the lcsA product by the transaminase lcsP may produce DPD at the C-terminus. Further hydroxylation steps performed alternatively by the cytochrome P450 monooxygenases lcsI, lcsK and lcsN then yield the non-methylated leucinostatins precursor. It is also possible that leucines can be hydroxylated prior to their incorporation into the peptide. Varying extents of methylation then lead to the formation of leucinostatins A and B. This chain is Cytochrome P450 monooxygenase lcsN, found in Purpureocillium lilacinum (Paecilomyces lilacinus).